Reading from the N-terminus, the 196-residue chain is ATP-dependent Clp protease proteolytic subunit (196 aa).

Ser-97 functions as the Nucleophile in the catalytic mechanism. His-122 is a catalytic residue.

It belongs to the peptidase S14 family. In terms of assembly, fourteen ClpP subunits assemble into 2 heptameric rings which stack back to back to give a disk-like structure with a central cavity, resembling the structure of eukaryotic proteasomes.

It localises to the cytoplasm. The enzyme catalyses Hydrolysis of proteins to small peptides in the presence of ATP and magnesium. alpha-casein is the usual test substrate. In the absence of ATP, only oligopeptides shorter than five residues are hydrolyzed (such as succinyl-Leu-Tyr-|-NHMec, and Leu-Tyr-Leu-|-Tyr-Trp, in which cleavage of the -Tyr-|-Leu- and -Tyr-|-Trp bonds also occurs).. Cleaves peptides in various proteins in a process that requires ATP hydrolysis. Has a chymotrypsin-like activity. Plays a major role in the degradation of misfolded proteins. This chain is ATP-dependent Clp protease proteolytic subunit, found in Lacticaseibacillus paracasei (strain ATCC 334 / BCRC 17002 / CCUG 31169 / CIP 107868 / KCTC 3260 / NRRL B-441) (Lactobacillus paracasei).